The primary structure comprises 370 residues: Putative agmatine deiminase (370 aa).

The active-site Amidino-cysteine intermediate is cysteine 361.

This sequence belongs to the agmatine deiminase family.

The catalysed reaction is agmatine + H2O = N-carbamoylputrescine + NH4(+). In Shewanella baltica (strain OS195), this protein is Putative agmatine deiminase.